Consider the following 282-residue polypeptide: Bifunctional protein FolD (282 aa).

Residues 166 to 168 (GAS) and I232 each bind NADP(+).

Belongs to the tetrahydrofolate dehydrogenase/cyclohydrolase family. Homodimer.

It carries out the reaction (6R)-5,10-methylene-5,6,7,8-tetrahydrofolate + NADP(+) = (6R)-5,10-methenyltetrahydrofolate + NADPH. The enzyme catalyses (6R)-5,10-methenyltetrahydrofolate + H2O = (6R)-10-formyltetrahydrofolate + H(+). The protein operates within one-carbon metabolism; tetrahydrofolate interconversion. Its function is as follows. Catalyzes the oxidation of 5,10-methylenetetrahydrofolate to 5,10-methenyltetrahydrofolate and then the hydrolysis of 5,10-methenyltetrahydrofolate to 10-formyltetrahydrofolate. The protein is Bifunctional protein FolD of Haemophilus influenzae (strain PittGG).